A 112-amino-acid chain; its full sequence is Photosystem II reaction center Psb28 protein (112 aa).

Belongs to the Psb28 family. Part of the photosystem II complex.

The protein localises to the cellular thylakoid membrane. This is Photosystem II reaction center Psb28 protein from Synechocystis sp. (strain ATCC 27184 / PCC 6803 / Kazusa).